The chain runs to 337 residues: Biotin synthase (337 aa).

Residues 55–284 enclose the Radical SAM core domain; sequence YFKNTIELCS…KKTILLAGGK (230 aa). Residues C73, C77, and C80 each contribute to the [4Fe-4S] cluster site. Residues C117, C149, and C209 each contribute to the [2Fe-2S] cluster site.

It belongs to the radical SAM superfamily. Biotin synthase family. Homodimer. [4Fe-4S] cluster serves as cofactor. Requires [2Fe-2S] cluster as cofactor.

It catalyses the reaction (4R,5S)-dethiobiotin + (sulfur carrier)-SH + 2 reduced [2Fe-2S]-[ferredoxin] + 2 S-adenosyl-L-methionine = (sulfur carrier)-H + biotin + 2 5'-deoxyadenosine + 2 L-methionine + 2 oxidized [2Fe-2S]-[ferredoxin]. The protein operates within cofactor biosynthesis; biotin biosynthesis; biotin from 7,8-diaminononanoate: step 2/2. Catalyzes the conversion of dethiobiotin (DTB) to biotin by the insertion of a sulfur atom into dethiobiotin via a radical-based mechanism. The protein is Biotin synthase of Caldicellulosiruptor bescii (strain ATCC BAA-1888 / DSM 6725 / KCTC 15123 / Z-1320) (Anaerocellum thermophilum).